A 536-amino-acid polypeptide reads, in one-letter code: Mitogen-activated protein kinase kinase kinase mom-4 (536 aa).

Residues 1-20 (MDNSSQSKPSSSSSSHSPSP) are compositionally biased toward low complexity. Residues 1 to 34 (MDNSSQSKPSSSSSSHSPSPAAITPTQRTTRDSG) form a disordered region. Positions 51-305 (NLNSHYLGKG…SSECVEYFTL (255 aa)) constitute a Protein kinase domain. ATP is bound by residues 57 to 65 (LGKGTYGLV) and Lys-84. The active-site Proton acceptor is Asp-176. Positions 314-438 (SVPLSDSSTN…EHRRDSNDEE (125 aa)) are disordered. Composition is skewed to polar residues over residues 315–325 (VPLSDSSTNGP) and 350–366 (NNRT…QQPG). A compositionally biased stretch (basic and acidic residues) spans 405 to 438 (KNFRDRAKSEQRQPHRDARPPPPFEHRRDSNDEE).

Belongs to the protein kinase superfamily. STE Ser/Thr protein kinase family. MAP kinase kinase kinase subfamily. As to quaternary structure, interacts with, and is activated by, tap-1. Mg(2+) is required as a cofactor. May be autophosphorylated.

The enzyme catalyses L-seryl-[protein] + ATP = O-phospho-L-seryl-[protein] + ADP + H(+). It carries out the reaction L-threonyl-[protein] + ATP = O-phospho-L-threonyl-[protein] + ADP + H(+). Part of the Wnt signaling pathway essential for the specification of the mesodermal cell fate in early embryos. Stimulates the wrm-1/lit-1-dependent phosphorylation of pop-1 and plays a role in the initial nuclear accumulation of wrm-1. The protein is Mitogen-activated protein kinase kinase kinase mom-4 of Caenorhabditis elegans.